The chain runs to 295 residues: HTH-type transcriptional activator IlvY (295 aa).

The HTH lysR-type domain occupies 1-58 (MDLRDLKTFLHLAESRHFGRSARAMHVSPSTLSRQIQRLEEDLGQPLFVRDNRTVTLT). Residues 18–37 (FGRSARAMHVSPSTLSRQIQ) constitute a DNA-binding region (H-T-H motif).

This sequence belongs to the LysR transcriptional regulatory family.

The protein resides in the cytoplasm. Functionally, this protein activates the transcription of the IlvC gene in the presence of acetolactate or acetohydroxybutyrate. IlvY is also a negative regulator of its own expression. This is HTH-type transcriptional activator IlvY (ilvY) from Salmonella typhi.